The chain runs to 369 residues: Probable trehalose-phosphate phosphatase I (369 aa).

The protein belongs to the trehalose phosphatase family. It depends on a divalent metal cation as a cofactor.

The catalysed reaction is alpha,alpha-trehalose 6-phosphate + H2O = alpha,alpha-trehalose + phosphate. Its pathway is glycan biosynthesis; trehalose biosynthesis. Removes the phosphate from trehalose 6-phosphate to produce free trehalose. Trehalose accumulation in plant may improve abiotic stress tolerance. The protein is Probable trehalose-phosphate phosphatase I (TPPI) of Arabidopsis thaliana (Mouse-ear cress).